The chain runs to 596 residues: Elongation factor 4 (596 aa).

The region spanning 2–184 (KHIRNFSIIA…VIVAKIPPPE (183 aa)) is the tr-type G domain. GTP is bound by residues 14 to 19 (DHGKST) and 131 to 134 (NKID).

Belongs to the TRAFAC class translation factor GTPase superfamily. Classic translation factor GTPase family. LepA subfamily.

The protein localises to the cell inner membrane. It catalyses the reaction GTP + H2O = GDP + phosphate + H(+). Required for accurate and efficient protein synthesis under certain stress conditions. May act as a fidelity factor of the translation reaction, by catalyzing a one-codon backward translocation of tRNAs on improperly translocated ribosomes. Back-translocation proceeds from a post-translocation (POST) complex to a pre-translocation (PRE) complex, thus giving elongation factor G a second chance to translocate the tRNAs correctly. Binds to ribosomes in a GTP-dependent manner. The protein is Elongation factor 4 of Shewanella putrefaciens (strain CN-32 / ATCC BAA-453).